Reading from the N-terminus, the 236-residue chain is Leucyl/phenylalanyl-tRNA--protein transferase (236 aa).

The protein belongs to the L/F-transferase family.

Its subcellular location is the cytoplasm. It catalyses the reaction N-terminal L-lysyl-[protein] + L-leucyl-tRNA(Leu) = N-terminal L-leucyl-L-lysyl-[protein] + tRNA(Leu) + H(+). The enzyme catalyses N-terminal L-arginyl-[protein] + L-leucyl-tRNA(Leu) = N-terminal L-leucyl-L-arginyl-[protein] + tRNA(Leu) + H(+). It carries out the reaction L-phenylalanyl-tRNA(Phe) + an N-terminal L-alpha-aminoacyl-[protein] = an N-terminal L-phenylalanyl-L-alpha-aminoacyl-[protein] + tRNA(Phe). In terms of biological role, functions in the N-end rule pathway of protein degradation where it conjugates Leu, Phe and, less efficiently, Met from aminoacyl-tRNAs to the N-termini of proteins containing an N-terminal arginine or lysine. The sequence is that of Leucyl/phenylalanyl-tRNA--protein transferase from Vibrio parahaemolyticus serotype O3:K6 (strain RIMD 2210633).